The chain runs to 412 residues: Mannose-6-phosphate isomerase (412 aa).

Residues Q99, H101, E126, and H265 each coordinate Zn(2+). Residue R284 is part of the active site.

Belongs to the mannose-6-phosphate isomerase type 1 family. The cofactor is Zn(2+).

Its subcellular location is the cytoplasm. The protein localises to the nucleus. The enzyme catalyses D-mannose 6-phosphate = D-fructose 6-phosphate. The protein operates within nucleotide-sugar biosynthesis; GDP-alpha-D-mannose biosynthesis; alpha-D-mannose 1-phosphate from D-fructose 6-phosphate: step 1/2. Involved in the synthesis of the GDP-mannose and dolichol-phosphate-mannose required for a number of critical mannosyl transfer reactions. This chain is Mannose-6-phosphate isomerase (pmi40), found in Schizosaccharomyces pombe (strain 972 / ATCC 24843) (Fission yeast).